The primary structure comprises 181 residues: SRP-independent targeting protein 2 (181 aa).

Topologically, residues 1–15 (MAGKAGRKQASSNAK) are cytoplasmic. Residues 16–36 (IIQGLYKQVSLFLGMAIVRLF) traverse the membrane as a helical segment. Residues 37–45 (ISRKVTIGQ) lie on the Lumenal side of the membrane. The chain crosses the membrane as a helical span at residues 46–66 (WIKLVALNVPMFVALYIIVLS). At 67 to 89 (GKPKYDGNRVVKQGIDLNDNTNL) the chain is on the cytoplasmic side. Residues 90–110 (ISYFFDLIYLSLFGNIGIIAF) form a helical membrane-spanning segment. The Lumenal segment spans residues 111–112 (RT). The helical transmembrane segment at 113-133 (FKFWWCLLLCPIYAGYKLYGL) threads the bilayer. The Cytoplasmic portion of the chain corresponds to 134-181 (KNMFMPGAQQTQADNRSKNANEGQSKSKRQMKRERRGETDSKIKYKYR). A compositionally biased stretch (polar residues) spans 144–157 (TQADNRSKNANEGQ). The tract at residues 144 to 181 (TQADNRSKNANEGQSKSKRQMKRERRGETDSKIKYKYR) is disordered. The span at 168 to 181 (RRGETDSKIKYKYR) shows a compositional bias: basic and acidic residues.

Belongs to the TMEM208 family. Interacts with SND1, PHO88/SND3 and the translocon complex subunit SEC61. ENV10/SND2 and PHO88/SND3 form a complex with the translocon in the endoplasmic reticulum membrane.

The protein resides in the endoplasmic reticulum membrane. In terms of biological role, functions in the SND pathway, a SRP (signal recognition particle) and GET (guided entry of tail-anchored proteins) independent pathway for targeting a broad range of substrate proteins to the endoplasmic reticulum. SND functions in parallel to GET in targeting proteins with downstream hydrophobic motifs. Involved in vacuolar processing and morphology. This is SRP-independent targeting protein 2 from Saccharomyces cerevisiae (strain ATCC 204508 / S288c) (Baker's yeast).